Here is a 213-residue protein sequence, read N- to C-terminus: tRNA (guanine-N(7)-)-methyltransferase (213 aa).

Asp-40, Glu-65, Asn-92, and Asp-118 together coordinate S-adenosyl-L-methionine. The active site involves Asp-118. Residues Lys-122 and Asp-154 each coordinate substrate.

The protein belongs to the class I-like SAM-binding methyltransferase superfamily. TrmB family.

It carries out the reaction guanosine(46) in tRNA + S-adenosyl-L-methionine = N(7)-methylguanosine(46) in tRNA + S-adenosyl-L-homocysteine. The protein operates within tRNA modification; N(7)-methylguanine-tRNA biosynthesis. Its function is as follows. Catalyzes the formation of N(7)-methylguanine at position 46 (m7G46) in tRNA. This chain is tRNA (guanine-N(7)-)-methyltransferase, found in Synechococcus elongatus (strain ATCC 33912 / PCC 7942 / FACHB-805) (Anacystis nidulans R2).